The sequence spans 60 residues: Cytochrome c oxidase subunit 7, mitochondrial (60 aa).

Topologically, residues 2-29 are mitochondrial matrix; that stretch reads ANKVIQLQKIFQSSTKPLWWRHPRSALY. A helical transmembrane segment spans residues 30–53; sequence LYPFYAIFAVAVVTPLLYIPNAIR. Topologically, residues 54 to 60 are mitochondrial intermembrane; that stretch reads GIKAKKA.

This sequence belongs to the cytochrome c oxidase VIIa family. In terms of assembly, component of the cytochrome c oxidase (complex IV, CIV), a multisubunit enzyme composed of 12 subunits. The complex is composed of a catalytic core of 3 subunits COX1, COX2 and COX3, encoded in the mitochondrial DNA, and 9 supernumerary subunits COX4, COX5A (or COX5B), COX6, COX7, COX8, COX9, COX12, COX13 and COX26, which are encoded in the nuclear genome. The complex exists as a monomer or a dimer and forms supercomplexes (SCs) in the inner mitochondrial membrane with a dimer of ubiquinol-cytochrome c oxidoreductase (cytochrome b-c1 complex, complex III, CIII), resulting in 2 different assemblies (supercomplexes III(2)IV and III(2)IV(2)).

The protein resides in the mitochondrion inner membrane. It functions in the pathway energy metabolism; oxidative phosphorylation. Component of the cytochrome c oxidase, the last enzyme in the mitochondrial electron transport chain which drives oxidative phosphorylation. The respiratory chain contains 3 multisubunit complexes succinate dehydrogenase (complex II, CII), ubiquinol-cytochrome c oxidoreductase (cytochrome b-c1 complex, complex III, CIII) and cytochrome c oxidase (complex IV, CIV), that cooperate to transfer electrons derived from NADH and succinate to molecular oxygen, creating an electrochemical gradient over the inner membrane that drives transmembrane transport and the ATP synthase. Cytochrome c oxidase is the component of the respiratory chain that catalyzes the reduction of oxygen to water. Electrons originating from reduced cytochrome c in the intermembrane space (IMS) are transferred via the dinuclear copper A center (CU(A)) of COX2 and heme A of COX1 to the active site in COX1, a binuclear center (BNC) formed by heme A3 and copper B (CU(B)). The BNC reduces molecular oxygen to 2 water molecules using 4 electrons from cytochrome c in the IMS and 4 protons from the mitochondrial matrix. In Saccharomyces cerevisiae (strain ATCC 204508 / S288c) (Baker's yeast), this protein is Cytochrome c oxidase subunit 7, mitochondrial (COX7).